The chain runs to 864 residues: Disintegrin and metalloproteinase domain-containing protein 15 (864 aa).

An N-terminal signal peptide occupies residues methionine 1 to proline 17. The interval arginine 18–methionine 45 is disordered. The propeptide occupies arginine 18 to arginine 207. Polar residues predominate over residues glutamine 34–methionine 45. The Cysteine switch signature appears at histidine 177 to histidine 184. Cysteine 179 serves as a coordination point for Zn(2+). Over aspartate 208 to threonine 696 the chain is Extracellular. Residues lysine 214–glutamine 415 form the Peptidase M12B domain. Asparagine 238 carries an N-linked (GlcNAc...) asparagine glycan. Disulfide bonds link cysteine 324-cysteine 410, cysteine 366-cysteine 394, cysteine 368-cysteine 377, and cysteine 481-cysteine 501. A Zn(2+)-binding site is contributed by histidine 349. Glutamate 350 is a catalytic residue. 2 residues coordinate Zn(2+): histidine 353 and histidine 359. N-linked (GlcNAc...) asparagine glycans are attached at residues asparagine 390 and asparagine 393. In terms of domain architecture, Disintegrin spans serine 422–aspartate 509. Asparagine 607 and asparagine 612 each carry an N-linked (GlcNAc...) asparagine glycan. 3 disulfides stabilise this stretch: cysteine 658-cysteine 668, cysteine 662-cysteine 674, and cysteine 676-cysteine 685. In terms of domain architecture, EGF-like spans cysteine 658–methionine 686. A helical transmembrane segment spans residues threonine 697–tryptophan 717. Phosphotyrosine; by HCK and LCK is present on residues tyrosine 716 and tyrosine 736. The Cytoplasmic portion of the chain corresponds to histidine 718–leucine 864. Positions tyrosine 736–leucine 864 are disordered. Residues serine 741–proline 750 are compositionally biased toward pro residues. The span at arginine 752–alanine 762 shows a compositional bias: polar residues. 2 stretches are compositionally biased toward pro residues: residues proline 768–valine 780 and threonine 814–alanine 825. Short sequence motifs (SH3-binding) lie at residues proline 816–proline 822 and arginine 851–proline 857.

In terms of assembly, interacts specifically with Src family protein-tyrosine kinases (PTKs). Interacts with ITAGV-ITGB3 (vitronectin receptor). Interacts with SH3GL2 and SNX9; this interaction occurs preferentially with ADAM15 precursor, rather than the processed form, suggesting it occurs in a secretory pathway compartment prior to the medial Golgi. Interacts with ITAG9-ITGB1. Interacts with SH3PXD2A. Interacts with ITAGV-ITGB1. Interacts with GRB2, HCK, ITSN1, ITSN2, LYN, MAPK1, MAPK3, NCF1, NCK1, nephrocystin, PTK6, SNX33, LCK and SRC. Requires Zn(2+) as cofactor. The precursor is cleaved by a furin endopeptidase. An additional membrane proximal site of cleavage affects a small percentage of the proteins and results in disulfide-linked fragments. The prodomain is apparently cleaved in several positions that are N-terminal of the furin cleavage site. Post-translationally, may be partially sialylated. In terms of processing, phosphorylation increases association with PTKs. Expressed moderately in pericytes of retina. Expressed in testis and in spermatozoa from the caput, corpus, and cauda epididymis, as well as in non-capacitated and acrosome-reacted sperm (at protein level). Highly expressed in heart, brain, lung, and kidney. Expressed at lower levels in spleen, liver, testis and muscle.

It localises to the endomembrane system. Its subcellular location is the cell junction. The protein resides in the adherens junction. The protein localises to the cell projection. It is found in the cilium. It localises to the flagellum. Its subcellular location is the cytoplasmic vesicle. The protein resides in the secretory vesicle. The protein localises to the acrosome. Its function is as follows. Active metalloproteinase with gelatinolytic and collagenolytic activity. Plays a role in the wound healing process. Mediates both heterotypic intraepithelial cell/T-cell interactions and homotypic T-cell aggregation. Inhibits beta-1 integrin-mediated cell adhesion and migration of airway smooth muscle cells. Suppresses cell motility on or towards fibronectin possibly by driving alpha-v/beta-1 integrin (ITAGV-ITGB1) cell surface expression via ERK1/2 inactivation. Cleaves E-cadherin in response to growth factor deprivation. Plays a role in glomerular cell migration. Plays a role in pathological neovascularization. May play a role in cartilage remodeling. May be proteolytically processed, during sperm epididymal maturation and the acrosome reaction. May play a role in sperm-egg binding through its disintegrin domain. Interactions with egg membrane could be mediated via binding between the disintegrin-like domain to one or more integrin receptors on the egg. The chain is Disintegrin and metalloproteinase domain-containing protein 15 (Adam15) from Mus musculus (Mouse).